A 40-amino-acid polypeptide reads, in one-letter code: Photosystem II reaction center protein J (40 aa).

The helical transmembrane segment at 8 to 28 (IPLWIIGTVAGIPVIGLIGIF) threads the bilayer.

This sequence belongs to the PsbJ family. In terms of assembly, PSII is composed of 1 copy each of membrane proteins PsbA, PsbB, PsbC, PsbD, PsbE, PsbF, PsbH, PsbI, PsbJ, PsbK, PsbL, PsbM, PsbT, PsbX, PsbY, PsbZ, Psb30/Ycf12, at least 3 peripheral proteins of the oxygen-evolving complex and a large number of cofactors. It forms dimeric complexes.

It is found in the plastid. The protein resides in the chloroplast thylakoid membrane. Its function is as follows. One of the components of the core complex of photosystem II (PSII). PSII is a light-driven water:plastoquinone oxidoreductase that uses light energy to abstract electrons from H(2)O, generating O(2) and a proton gradient subsequently used for ATP formation. It consists of a core antenna complex that captures photons, and an electron transfer chain that converts photonic excitation into a charge separation. In Pelargonium hortorum (Common geranium), this protein is Photosystem II reaction center protein J.